Reading from the N-terminus, the 375-residue chain is MTLQATPLNAIHRALGARMVDFGGWDMPVNYGSQIEEHNAVRSDAGMFDVSHMCVVDLNGANTRAFLRGLLANNVDKLQTPGKALYSCMLDEKGGVIDDLIVYFFAEDRFRLVVNASTALGDIEWIRARNDATGSGVTITPRRGDVAPAGALPLAIVAVQGPNARTKVWNTFPSTQPSDALKPFNAVVVHDPAIGEIMVARTGYTGEDGFELVVPAENVAAVWEKLDAAGVRPAGLGARDTLRLEAGMNLYGQDMDINTSPLDAGLAWTVDLQSERDFTGKAALAAAGQRQQFLGLILRDKGGVLRAHQKVVTAAGDGEITSGTFSPSLSQSIAFARLPMGVAVGDTVQVEIRDRKLAATVVKLPFVRNGKALVS.

Belongs to the GcvT family. As to quaternary structure, the glycine cleavage system is composed of four proteins: P, T, L and H.

It carries out the reaction N(6)-[(R)-S(8)-aminomethyldihydrolipoyl]-L-lysyl-[protein] + (6S)-5,6,7,8-tetrahydrofolate = N(6)-[(R)-dihydrolipoyl]-L-lysyl-[protein] + (6R)-5,10-methylene-5,6,7,8-tetrahydrofolate + NH4(+). In terms of biological role, the glycine cleavage system catalyzes the degradation of glycine. The chain is Aminomethyltransferase from Cupriavidus pinatubonensis (strain JMP 134 / LMG 1197) (Cupriavidus necator (strain JMP 134)).